The sequence spans 1254 residues: Ubiquitin carboxyl-terminal hydrolase 12 (1254 aa).

S84 bears the Phosphoserine mark. The region spanning 97–199 is the DUSP domain; the sequence is NVLEQQRDVV…GSYPVVTNLV (103 aa). The USP domain occupies 364–1110; sequence TGLVNLGNTC…SAYLLFYIRR (747 aa). The Nucleophile role is filled by C373. The interval 827-893 is disordered; the sequence is DEGDTEGSEA…EPELTDKPEA (67 aa). Low complexity predominate over residues 854–864; that stretch reads TVTNNENVNNT. Acidic residues predominate over residues 867 to 883; that stretch reads RDEDMELTDDVEEDAST. Catalysis depends on H1068, which acts as the Proton acceptor. S1160 carries the post-translational modification Phosphoserine. The tract at residues 1188–1207 is disordered; it reads QDCNDEDDNDDGERTNSGRR. Acidic residues predominate over residues 1189 to 1198; it reads DCNDEDDNDD.

It belongs to the peptidase C19 family. Interacts with FZO1.

The enzyme catalyses Thiol-dependent hydrolysis of ester, thioester, amide, peptide and isopeptide bonds formed by the C-terminal Gly of ubiquitin (a 76-residue protein attached to proteins as an intracellular targeting signal).. Functionally, ubiquitin carboxyl-terminal hydrolase that recognizes ubiquitin chains that stabilize FZO1 and promote mitochondrial fusion. UBP12 deubiquitylates FZO1 only after oligomerization. The protein is Ubiquitin carboxyl-terminal hydrolase 12 (UBP12) of Saccharomyces cerevisiae (strain ATCC 204508 / S288c) (Baker's yeast).